The chain runs to 183 residues: Interleukin-36 beta (183 aa).

The propeptide occupies 1-30 (MMAFPPQSCVHVLPPKSIQMWEPNHNTMHG).

The protein belongs to the IL-1 family. Interacts with cargo receptor TMED10; the interaction mediates the translocation from the cytoplasm into the ERGIC (endoplasmic reticulum-Golgi intermediate compartment) and thereby secretion. In terms of processing, N-terminal truncation leads to a dramatic enhancement of its activity (&gt;1000-fold).

It localises to the cytoplasm. Its subcellular location is the secreted. In terms of biological role, cytokine that binds to and signals through the IL1RL2/IL-36R receptor which in turn activates NF-kappa-B and MAPK signaling pathways in target cells linked to a pro-inflammatory response. Part of the IL-36 signaling system that is thought to be present in epithelial barriers and to take part in local inflammatory response; similar to the IL-1 system with which it shares the coreceptor IL1RAP. Stimulates production of interleukin-6 and interleukin-8 in synovial fibrobasts, articular chondrocytes and mature adipocytes. Induces expression of a number of antimicrobial peptides including beta-defensin 4 and beta-defensin 103 as well as a number of matrix metalloproteases. Seems to be involved in skin inflammatory response by acting on keratinocytes, dendritic cells and indirectly on T-cells to drive tissue infiltration, cell maturation and cell proliferation. Induces the production of pro-inflammatory cytokines in bone marrow-derived dendritic cells (BMDCs), including IL-12, Il-1 beta, IL-6, TNF-alpha and IL-23, and activates p38 MAPK phosphorylation in BMDCs. Involved in dendritic cell maturation by stimulating the surface expression of CD80, CD86 and MHC class II. Induces the production of IFN-gamma, IL-4 and IL-17 by T-helper 1 (Th1) cells, cultured CD4(+) T-cells and splenocytes. The sequence is that of Interleukin-36 beta from Mus musculus (Mouse).